The following is a 110-amino-acid chain: uncharacterized protein (110 aa).

Residues 86-110 (SEEIDEPVMKKRHRRKGSPHRAPFF) are disordered. Residues 95–104 (KKRHRRKGSP) are compositionally biased toward basic residues.

This is an uncharacterized protein from Arabidopsis thaliana (Mouse-ear cress).